Consider the following 272-residue polypeptide: Centromere protein V-like protein 3 (272 aa).

A compositionally biased stretch (basic residues) spans 1–17 (MGRVRNRATAQRRRRKR). Disordered regions lie at residues 1-23 (MGRV…DPPA) and 65-95 (RRAR…KELD). A compositionally biased stretch (pro residues) spans 77-88 (PSAPLPDPPAPA). The CENP-V/GFA domain occupies 133–246 (HTGGCHCGAV…EEVGGGDPGE (114 aa)). Zn(2+) contacts are provided by Cys-137, Cys-139, Cys-157, Cys-159, Cys-162, Cys-201, and Cys-204. The disordered stretch occupies residues 240 to 272 (GGGDPGEEAAEEHKAIHKTSSQSAPACPREQEQ).

Belongs to the Gfa family. Zn(2+) serves as cofactor.

This is Centromere protein V-like protein 3 from Homo sapiens (Human).